Reading from the N-terminus, the 233-residue chain is MSVISMKQLLEAGVHFGHQTRRWNPKMKRYIFTERNGIYIIDLQKTVKKVEEAFNVMRNIAAEGGDILFVGTKKQAQEAIKEEATRAGMYFVNQRWLGGTLTNFQTIQKRIKRLKDIERMQEDGTFDVLPKKEVVQLKKELERLEKFLGGIKDMKGLPSALFVVDPRKERIAVAEARKLNIPIIGIVDTNCDPDEIDHVIPANDDAIRAVKLLTSKMADAILEAKQGEETVTA.

This sequence belongs to the universal ribosomal protein uS2 family.

The polypeptide is Small ribosomal subunit protein uS2 (Bacillus cytotoxicus (strain DSM 22905 / CIP 110041 / 391-98 / NVH 391-98)).